A 708-amino-acid polypeptide reads, in one-letter code: Polyribonucleotide nucleotidyltransferase (708 aa).

Positions 487 and 493 each coordinate Mg(2+). Residues 554 to 613 (PRIHTMKISADKIKDVIGKGGAVIRALTEETGTTIEIEDDGTIKIAATEGAAAKEAIRRI) enclose the KH domain. The 69-residue stretch at 623–691 (GVIYTGKVAR…RQGRVRLSMK (69 aa)) folds into the S1 motif domain.

This sequence belongs to the polyribonucleotide nucleotidyltransferase family. In terms of assembly, component of the RNA degradosome, which is a multiprotein complex involved in RNA processing and mRNA degradation. Requires Mg(2+) as cofactor.

The protein localises to the cytoplasm. It catalyses the reaction RNA(n+1) + phosphate = RNA(n) + a ribonucleoside 5'-diphosphate. Involved in mRNA degradation. Catalyzes the phosphorolysis of single-stranded polyribonucleotides processively in the 3'- to 5'-direction. The sequence is that of Polyribonucleotide nucleotidyltransferase from Vibrio vulnificus (strain CMCP6).